Consider the following 314-residue polypeptide: Putative S-adenosyl-L-methionine-dependent methyltransferase MAV_4441 (314 aa).

Residues Asp138 and 167–168 (DL) each bind S-adenosyl-L-methionine.

The protein belongs to the UPF0677 family.

Exhibits S-adenosyl-L-methionine-dependent methyltransferase activity. This chain is Putative S-adenosyl-L-methionine-dependent methyltransferase MAV_4441, found in Mycobacterium avium (strain 104).